The chain runs to 272 residues: Phytolongin Phyl2.2 (272 aa).

Residues 12-116 (CIAKGTVVLA…LINPVSHCLQ (105 aa)) enclose the Longin domain. A helical; Anchor for type IV membrane protein membrane pass occupies residues 243 to 263 (WVVLMFDFCICAVLFGIWLWI).

It belongs to the synaptobrevin family.

It is found in the membrane. In terms of biological role, non-SNARE longin protein involved in membrane-trafficking machinery. This chain is Phytolongin Phyl2.2, found in Arabidopsis thaliana (Mouse-ear cress).